The chain runs to 369 residues: tRNA 2-selenouridine synthase (369 aa).

Positions 12–136 (FLDDIPLMDV…LRNFLFETTR (125 aa)) constitute a Rhodanese domain. Residue cysteine 95 is the S-selanylcysteine intermediate of the active site.

This sequence belongs to the SelU family. In terms of assembly, monomer.

It carries out the reaction 5-methylaminomethyl-2-thiouridine(34) in tRNA + selenophosphate + (2E)-geranyl diphosphate + H2O + H(+) = 5-methylaminomethyl-2-selenouridine(34) in tRNA + (2E)-thiogeraniol + phosphate + diphosphate. It catalyses the reaction 5-methylaminomethyl-2-thiouridine(34) in tRNA + (2E)-geranyl diphosphate = 5-methylaminomethyl-S-(2E)-geranyl-thiouridine(34) in tRNA + diphosphate. The catalysed reaction is 5-methylaminomethyl-S-(2E)-geranyl-thiouridine(34) in tRNA + selenophosphate + H(+) = 5-methylaminomethyl-2-(Se-phospho)selenouridine(34) in tRNA + (2E)-thiogeraniol. The enzyme catalyses 5-methylaminomethyl-2-(Se-phospho)selenouridine(34) in tRNA + H2O = 5-methylaminomethyl-2-selenouridine(34) in tRNA + phosphate. Functionally, involved in the post-transcriptional modification of the uridine at the wobble position (U34) of tRNA(Lys), tRNA(Glu) and tRNA(Gln). Catalyzes the conversion of 2-thiouridine (S2U-RNA) to 2-selenouridine (Se2U-RNA). Acts in a two-step process involving geranylation of 2-thiouridine (S2U) to S-geranyl-2-thiouridine (geS2U) and subsequent selenation of the latter derivative to 2-selenouridine (Se2U) in the tRNA chain. This chain is tRNA 2-selenouridine synthase, found in Pseudomonas aeruginosa (strain ATCC 15692 / DSM 22644 / CIP 104116 / JCM 14847 / LMG 12228 / 1C / PRS 101 / PAO1).